The sequence spans 95 residues: Orphan antitoxin ParD2 (95 aa).

Functionally, antitoxin component of a non-functional type II toxin-antitoxin (TA system). Does not neutralize the effect of any of the RelE or ParE toxins. The chain is Orphan antitoxin ParD2 (parD2) from Caulobacter vibrioides (strain ATCC 19089 / CIP 103742 / CB 15) (Caulobacter crescentus).